The primary structure comprises 77 residues: RNA-binding protein Hfq (77 aa).

The Sm domain occupies 10–70 (DAFLNHVRKT…ISTVMPAQPI (61 aa)).

The protein belongs to the Hfq family. In terms of assembly, homohexamer.

Its function is as follows. RNA chaperone that binds small regulatory RNA (sRNAs) and mRNAs to facilitate mRNA translational regulation in response to envelope stress, environmental stress and changes in metabolite concentrations. Also binds with high specificity to tRNAs. The polypeptide is RNA-binding protein Hfq (Jannaschia sp. (strain CCS1)).